Reading from the N-terminus, the 285-residue chain is Small ribosomal subunit biogenesis GTPase RsgA (285 aa).

Residues 61 to 215 (KNQLIRPKVA…IIDSPGFSSF (155 aa)) enclose the CP-type G domain. Residues 110 to 113 (TKID) and 159 to 167 (GQTGVGKTS) each bind GTP. The Zn(2+) site is built by Cys239, Cys244, His246, and Cys254.

This sequence belongs to the TRAFAC class YlqF/YawG GTPase family. RsgA subfamily. Monomer. Associates with 30S ribosomal subunit, binds 16S rRNA. Zn(2+) serves as cofactor.

The protein resides in the cytoplasm. Functionally, one of several proteins that assist in the late maturation steps of the functional core of the 30S ribosomal subunit. Helps release RbfA from mature subunits. May play a role in the assembly of ribosomal proteins into the subunit. Circularly permuted GTPase that catalyzes slow GTP hydrolysis, GTPase activity is stimulated by the 30S ribosomal subunit. This Mesomycoplasma hyopneumoniae (strain 7448) (Mycoplasma hyopneumoniae) protein is Small ribosomal subunit biogenesis GTPase RsgA.